Reading from the N-terminus, the 163-residue chain is Nucleotide-binding protein Dde_2479 (163 aa).

It belongs to the YajQ family.

In terms of biological role, nucleotide-binding protein. The polypeptide is Nucleotide-binding protein Dde_2479 (Oleidesulfovibrio alaskensis (strain ATCC BAA-1058 / DSM 17464 / G20) (Desulfovibrio alaskensis)).